The following is a 294-amino-acid chain: Ribosomal protein L11 methyltransferase (294 aa).

Residues Thr146, Gly167, Asp189, and Asn231 each coordinate S-adenosyl-L-methionine.

Belongs to the methyltransferase superfamily. PrmA family.

The protein localises to the cytoplasm. The catalysed reaction is L-lysyl-[protein] + 3 S-adenosyl-L-methionine = N(6),N(6),N(6)-trimethyl-L-lysyl-[protein] + 3 S-adenosyl-L-homocysteine + 3 H(+). Its function is as follows. Methylates ribosomal protein L11. This chain is Ribosomal protein L11 methyltransferase, found in Aliivibrio fischeri (strain ATCC 700601 / ES114) (Vibrio fischeri).